Reading from the N-terminus, the 531-residue chain is Putative heme-binding protein HQ_1094A (531 aa).

A heme-binding site is contributed by His-177. Residues 269–340 (AHGEAHGHAH…STNTNTQDSE (72 aa)) are disordered. Residues 271 to 281 (GEAHGHAHGDS) are compositionally biased toward basic and acidic residues. A compositionally biased stretch (gly residues) spans 284–306 (GSGGGGGSSHGQSPGGASAGGSA). Residues 308–317 (GTEDADHSDS) show a composition bias toward basic and acidic residues. The segment covering 318-338 (RSTTSADTTQSDTSTNTNTQD) has biased composition (low complexity). Positions 441–529 (GTMGMFYTVK…VLSERPRHVF (89 aa)) constitute an ABM domain.

The protein in the N-terminal section; belongs to the ChdC family.

The polypeptide is Putative heme-binding protein HQ_1094A (Haloquadratum walsbyi (strain DSM 16790 / HBSQ001)).